The following is an 867-amino-acid chain: Alanine--tRNA ligase (867 aa).

Residues His555, His559, Cys657, and His661 each coordinate Zn(2+).

This sequence belongs to the class-II aminoacyl-tRNA synthetase family. Requires Zn(2+) as cofactor.

It is found in the cytoplasm. The enzyme catalyses tRNA(Ala) + L-alanine + ATP = L-alanyl-tRNA(Ala) + AMP + diphosphate. In terms of biological role, catalyzes the attachment of alanine to tRNA(Ala) in a two-step reaction: alanine is first activated by ATP to form Ala-AMP and then transferred to the acceptor end of tRNA(Ala). Also edits incorrectly charged Ser-tRNA(Ala) and Gly-tRNA(Ala) via its editing domain. The sequence is that of Alanine--tRNA ligase from Psychromonas ingrahamii (strain DSM 17664 / CCUG 51855 / 37).